A 585-amino-acid chain; its full sequence is A-type ATP synthase subunit A (585 aa).

231-238 (GPFGSGKT) contributes to the ATP binding site.

This sequence belongs to the ATPase alpha/beta chains family. As to quaternary structure, has multiple subunits with at least A(3), B(3), C, D, E, F, H, I and proteolipid K(x).

The protein resides in the cell membrane. It catalyses the reaction ATP + H2O + 4 H(+)(in) = ADP + phosphate + 5 H(+)(out). In terms of biological role, component of the A-type ATP synthase that produces ATP from ADP in the presence of a proton gradient across the membrane. The A chain is the catalytic subunit. This chain is A-type ATP synthase subunit A, found in Thermococcus gammatolerans (strain DSM 15229 / JCM 11827 / EJ3).